The primary structure comprises 218 residues: MATLGTGMRCLKSCVFILNIICLLCSLVLIGAGAYVEVKFSQYEANLHKVWQAAPIAIIVVGVVILIVSFLGCCGAIKENVCMLYMYAFFLIVLLIAELVAAIVAVVYKDKIDDEINTLMTGALENPNEEITATMDKIQTSFHCCGVKGPDDYKGNVPASCKEGQEVYVQGCLSVFSAFLKRNLIIVACVAFGVCFFQLLSIVIACCLGQRIHDYQNV.

Residues 1 to 12 (MATLGTGMRCLK) lie on the Cytoplasmic side of the membrane. The chain crosses the membrane as a helical span at residues 13-36 (SCVFILNIICLLCSLVLIGAGAYV). The Extracellular portion of the chain corresponds to 37-55 (EVKFSQYEANLHKVWQAAP). A helical membrane pass occupies residues 56–71 (IAIIVVGVVILIVSFL). The Cytoplasmic segment spans residues 72–82 (GCCGAIKENVC). A helical membrane pass occupies residues 83–108 (MLYMYAFFLIVLLIAELVAAIVAVVY). The Extracellular portion of the chain corresponds to 109 to 183 (KDKIDDEINT…SVFSAFLKRN (75 aa)). The helical transmembrane segment at 184 to 205 (LIIVACVAFGVCFFQLLSIVIA) threads the bilayer. The Cytoplasmic portion of the chain corresponds to 206-218 (CCLGQRIHDYQNV).

The protein belongs to the tetraspanin (TM4SF) family.

The protein resides in the membrane. In Schistosoma japonicum (Blood fluke), this protein is 23 kDa integral membrane protein.